The sequence spans 239 residues: Isoprenyl transferase (239 aa).

Residue D16 is part of the active site. D16 serves as a coordination point for Mg(2+). Residues G17–R20, W21, R29, H33, and S61–E63 each bind substrate. Catalysis depends on N64, which acts as the Proton acceptor. Substrate-binding positions include W65, R67, R187, and R193 to S195. E206 contributes to the Mg(2+) binding site.

The protein belongs to the UPP synthase family. In terms of assembly, homodimer. It depends on Mg(2+) as a cofactor.

Its function is as follows. Catalyzes the condensation of isopentenyl diphosphate (IPP) with allylic pyrophosphates generating different type of terpenoids. The polypeptide is Isoprenyl transferase (Lactobacillus johnsonii (strain CNCM I-12250 / La1 / NCC 533)).